A 440-amino-acid chain; its full sequence is Aspartokinase (440 aa).

This sequence belongs to the aspartokinase family.

The catalysed reaction is L-aspartate + ATP = 4-phospho-L-aspartate + ADP. Its pathway is amino-acid biosynthesis; L-lysine biosynthesis via DAP pathway; (S)-tetrahydrodipicolinate from L-aspartate: step 1/4. The protein operates within amino-acid biosynthesis; L-methionine biosynthesis via de novo pathway; L-homoserine from L-aspartate: step 1/3. It participates in amino-acid biosynthesis; L-threonine biosynthesis; L-threonine from L-aspartate: step 1/5. This is Aspartokinase (lysC) from Chlamydia pneumoniae (Chlamydophila pneumoniae).